An 86-amino-acid chain; its full sequence is Small ribosomal subunit protein bS16c (86 aa).

The protein belongs to the bacterial ribosomal protein bS16 family.

The protein localises to the plastid. Its subcellular location is the chloroplast. The polypeptide is Small ribosomal subunit protein bS16c (Liriodendron tulipifera (Tuliptree)).